A 122-amino-acid chain; its full sequence is Large ribosomal subunit protein uL14c (122 aa).

This sequence belongs to the universal ribosomal protein uL14 family. As to quaternary structure, part of the 50S ribosomal subunit.

Its subcellular location is the plastid. The protein resides in the chloroplast. Binds to 23S rRNA. The protein is Large ribosomal subunit protein uL14c of Gnetum parvifolium (Small-leaved jointfir).